Here is a 314-residue protein sequence, read N- to C-terminus: Homoserine O-succinyltransferase (314 aa).

C142 (acyl-thioester intermediate) is an active-site residue. Residues K163 and S192 each coordinate substrate. H235 functions as the Proton acceptor in the catalytic mechanism. E237 is an active-site residue. Residue R249 coordinates substrate.

It belongs to the MetA family.

Its subcellular location is the cytoplasm. The catalysed reaction is L-homoserine + succinyl-CoA = O-succinyl-L-homoserine + CoA. It functions in the pathway amino-acid biosynthesis; L-methionine biosynthesis via de novo pathway; O-succinyl-L-homoserine from L-homoserine: step 1/1. Its function is as follows. Transfers a succinyl group from succinyl-CoA to L-homoserine, forming succinyl-L-homoserine. This is Homoserine O-succinyltransferase from Aeromonas salmonicida (strain A449).